Consider the following 331-residue polypeptide: Serine racemase (331 aa).

ATP contacts are provided by Ser-34 and Lys-54. Lys-59 acts as the Proton acceptor in catalysis. Lys-59 carries the N6-(pyridoxal phosphate)lysine modification. Position 81 (Thr-81) interacts with Ca(2+). The active-site Proton acceptor is the Ser-84. A pyridoxal 5'-phosphate-binding site is contributed by Asn-86. Tyr-121 serves as a coordination point for ATP. Mg(2+) is bound at residue Asp-178. Residues Gly-186, Gly-187, and Gly-188 each coordinate pyridoxal 5'-phosphate. Residues Glu-210, Ala-214, and Asp-216 each contribute to the Ca(2+) site. Positions 210, 214, and 216 each coordinate Mg(2+). Residues Glu-210, Ala-214, and Asp-216 each contribute to the Mn(2+) site. Lys-278 serves as a coordination point for ATP. Residue Ser-314 participates in pyridoxal 5'-phosphate binding. An ATP-binding site is contributed by Asn-317.

This sequence belongs to the serine/threonine dehydratase family. As to quaternary structure, homodimer. It depends on Mg(2+) as a cofactor. The cofactor is Mn(2+). Ca(2+) serves as cofactor. Pyridoxal 5'-phosphate is required as a cofactor. Expressed in the whole plant.

It catalyses the reaction L-serine = D-serine. The catalysed reaction is L-serine = pyruvate + NH4(+). It carries out the reaction D-serine = pyruvate + NH4(+). Inhibited by hydroxylamine. Racemase activity is enhanced by Ca(2+), Mg(2+), Mn(2+), and is decreased by Ni(2+), Zn(2+). Hydratase activity is enhanced by Ca(2+), Mg(2+), Mn(2+), Cu(2+), Fe(2+), Ni(2+). Functionally, catalyzes the synthesis of D-serine from L-serine. Has dehydratase activity towards both L-serine and D-serine. Displays high substrate specificity for L-serine, whereas L-alanine, L-arginine, and L-glutamine were poor substrates. This Arabidopsis thaliana (Mouse-ear cress) protein is Serine racemase (SR).